The chain runs to 145 residues: MALRLILGFDYGTKQIGVAVGQVITGQARELCTLKAQNGIPDWNQVEALIKEWKPDAVVVGLPLNMDGTPSDMCLRAEKFARRLNGRYNIPFYTHDERLTTFEAKGERRDRGGQKGSYRDNPVDAIAAALLLQGWLDENTALFES.

The protein belongs to the YqgF nuclease family.

It localises to the cytoplasm. In terms of biological role, could be a nuclease involved in processing of the 5'-end of pre-16S rRNA. This chain is Putative pre-16S rRNA nuclease, found in Pseudomonas fluorescens (strain SBW25).